A 281-amino-acid chain; its full sequence is uncharacterized protein (281 aa).

Positions 1–23 (MKLYRSLKAALLPGICTSILLAS) are cleaved as a signal peptide. C24 is lipidated: N-palmitoyl cysteine. C24 carries S-diacylglycerol cysteine lipidation. Positions 145–165 (HHDHNHMHNHEHEHEEHHDEE) are disordered. A compositionally biased stretch (basic and acidic residues) spans 150–161 (HMHNHEHEHEEH).

The protein localises to the cell membrane. This is an uncharacterized protein from Mycoplasma genitalium (strain ATCC 33530 / DSM 19775 / NCTC 10195 / G37) (Mycoplasmoides genitalium).